The following is a 130-amino-acid chain: Glycoprotein hormone beta-5 (130 aa).

The N-terminal stretch at 1 to 24 (MKLVYLVLGAVALLLLGGPDSVLS) is a signal peptide. 5 disulfide bridges follow: Cys36–Cys84, Cys50–Cys99, Cys60–Cys115, Cys64–Cys117, and Cys120–Cys127. Residue Asn87 is glycosylated (N-linked (GlcNAc...) asparagine).

It belongs to the glycoprotein hormones subunit beta family. As to quaternary structure, heterodimer with GPHA2; this heterodimer interacts with thyroid-stimulating hormone receptor (TSHR), and hence stimulates cAMP production. In terms of processing, N-glycosylated. In terms of tissue distribution, expressed in the anterior lobe of pituitary.

It is found in the secreted. Functionally, functions as a heterodimeric glycoprotein hormone with GPHA2 able to bind and activate the thyroid-stimulating hormone receptor (TSHR), leading to increased cAMP production. Plays a central role in controlling thyroid cell metabolism. In Mus musculus (Mouse), this protein is Glycoprotein hormone beta-5 (Gphb5).